Here is a 249-residue protein sequence, read N- to C-terminus: Uridylate kinase (249 aa).

Residue 23-26 coordinates ATP; the sequence is KISG. The tract at residues 31–36 is involved in allosteric activation by GTP; it reads GDQGFG. Residue glycine 65 participates in UMP binding. ATP contacts are provided by glycine 66 and arginine 70. Residues aspartate 85 and 146-153 each bind UMP; that span reads TGNPYFTT. Residues threonine 173, tyrosine 179, and aspartate 182 each contribute to the ATP site.

This sequence belongs to the UMP kinase family. In terms of assembly, homohexamer.

It is found in the cytoplasm. It carries out the reaction UMP + ATP = UDP + ADP. Its pathway is pyrimidine metabolism; CTP biosynthesis via de novo pathway; UDP from UMP (UMPK route): step 1/1. Its activity is regulated as follows. Allosterically activated by GTP. Inhibited by UTP. Functionally, catalyzes the reversible phosphorylation of UMP to UDP. This Jannaschia sp. (strain CCS1) protein is Uridylate kinase.